The sequence spans 242 residues: 1-(5-phosphoribosyl)-5-[(5-phosphoribosylamino)methylideneamino] imidazole-4-carboxamide isomerase (242 aa).

The active-site Proton acceptor is Asp-8. Asp-130 acts as the Proton donor in catalysis.

It belongs to the HisA/HisF family.

It is found in the cytoplasm. It catalyses the reaction 1-(5-phospho-beta-D-ribosyl)-5-[(5-phospho-beta-D-ribosylamino)methylideneamino]imidazole-4-carboxamide = 5-[(5-phospho-1-deoxy-D-ribulos-1-ylimino)methylamino]-1-(5-phospho-beta-D-ribosyl)imidazole-4-carboxamide. It participates in amino-acid biosynthesis; L-histidine biosynthesis; L-histidine from 5-phospho-alpha-D-ribose 1-diphosphate: step 4/9. This Acidithiobacillus ferrooxidans (strain ATCC 53993 / BNL-5-31) (Leptospirillum ferrooxidans (ATCC 53993)) protein is 1-(5-phosphoribosyl)-5-[(5-phosphoribosylamino)methylideneamino] imidazole-4-carboxamide isomerase.